We begin with the raw amino-acid sequence, 435 residues long: MDQEIEIPSFFLCPISLDIMKDPVIVSTGITYDRESIEKWLFSGKKNSCPVTKQVITETDLTPNHTLRRLIQSWCTLNASYGIERIPTPKPPICKSEIEKLIKESSSSHLNQVKCLKRLRQIVSENTTNKRCLEAAEVPEFLANIVSNSVDTYNSPSSSLSSSNLNDMCQSNMLENRFDSSRSLMDEALSVLYHLDTSETALKSLLNNKKGTNLVKTLTKIMQRGIYESRAYAALLLKKLLEVADPMQIILLERELFGEVIQILHDQISHKATRSAMQILVITCPWGRNRHKAVEGGTISMIIELLMDDTFSSERRNSEMAMVVLDMLCQCAEGRAEFLNHGAAIAVVSKKILRVSQITSERAVRVLLSVGRFCATPSLLQEMLQLGVVAKLCLVLQVSCGNKTKEKAKELLKLHARVWRESPCVPRNLYDSYPA.

Residues 6-81 (EIPSFFLCPI…QSWCTLNASY (76 aa)) form the U-box domain.

As to quaternary structure, interacts with RPN12A. Binds to EXO70B2. Post-translationally, auto-ubiquitinated leading to degradation via the 26S proteasome. This Auto-ubiquitination is repressed by the bacterial elicitor flg22 thus leading to a transiently increased protein stabilization and accumulation.

Its subcellular location is the cytoplasm. The catalysed reaction is S-ubiquitinyl-[E2 ubiquitin-conjugating enzyme]-L-cysteine + [acceptor protein]-L-lysine = [E2 ubiquitin-conjugating enzyme]-L-cysteine + N(6)-ubiquitinyl-[acceptor protein]-L-lysine.. It participates in protein modification; protein ubiquitination. E3 ubiquitin-protein ligase that negatively regulates water stress response. May control in coordination with PUB23 a drought signaling pathway by ubiquitinating cytosolic RPN12a. Acts as a negative regulator of the immunity triggered by the pathogen-associated molecular patterns (PAMPs), in association with PUB23 and PUB24. Regulates EXO70B2 ubiquitination and degradation via the 26S proteasome to attenuate PAMP-induced signaling. In Arabidopsis thaliana (Mouse-ear cress), this protein is E3 ubiquitin-protein ligase PUB22.